Consider the following 144-residue polypeptide: Large ribosomal subunit protein uL16 (144 aa).

The protein belongs to the universal ribosomal protein uL16 family. As to quaternary structure, part of the 50S ribosomal subunit.

Binds 23S rRNA and is also seen to make contacts with the A and possibly P site tRNAs. This Latilactobacillus sakei subsp. sakei (strain 23K) (Lactobacillus sakei subsp. sakei) protein is Large ribosomal subunit protein uL16.